The primary structure comprises 301 residues: Probable alpha-L-glutamate ligase 1 (301 aa).

The 184-residue stretch at 104-287 (LQLLSRKGIG…VTEPIVEYIE (184 aa)) folds into the ATP-grasp domain. ATP is bound by residues K141, 178–179 (EY), D187, and 211–213 (RSN). Positions 248, 260, and 262 each coordinate Mg(2+). Mn(2+) is bound by residues D248, E260, and N262.

Belongs to the RimK family. Mg(2+) serves as cofactor. Requires Mn(2+) as cofactor.

This is Probable alpha-L-glutamate ligase 1 from Shewanella sp. (strain ANA-3).